Consider the following 231-residue polypeptide: Sugar fermentation stimulation protein homolog (231 aa).

It belongs to the SfsA family.

The chain is Sugar fermentation stimulation protein homolog from Geobacter sp. (strain M21).